The sequence spans 394 residues: Tubulin-like protein CetZ4 (394 aa).

GTP contacts are provided by residues 10–14 (QAGGK), 110–112 (GTG), E142, N169, and N187.

The protein belongs to the CetZ family.

The protein localises to the cytoplasm. Involved in cell shape control. In Haloferax volcanii (strain ATCC 29605 / DSM 3757 / JCM 8879 / NBRC 14742 / NCIMB 2012 / VKM B-1768 / DS2) (Halobacterium volcanii), this protein is Tubulin-like protein CetZ4.